Here is a 67-residue protein sequence, read N- to C-terminus: Conotoxin LiC33 (67 aa).

The signal sequence occupies residues 1–22; sequence MRCVPVFIILLLLSPSAPSVDA. Positions 23-48 are excised as a propeptide; the sequence is HPKTKDDVPLASFHDDAKRTLQRLWI. A Phenylalanine amide modification is found at phenylalanine 63. Positions 65–67 are excised as a propeptide; it reads KGK.

Belongs to the conotoxin T superfamily. Post-translationally, contains 2 disulfide bonds that can be either 'C1-C3, C2-C4' or 'C1-C4, C2-C3', since these disulfide connectivities have been observed for conotoxins with cysteine framework V (for examples, see AC P0DQQ7 and AC P81755). As to expression, expressed by the venom duct.

The protein localises to the secreted. The sequence is that of Conotoxin LiC33 from Conus lividus (Livid cone).